We begin with the raw amino-acid sequence, 323 residues long: uncharacterized protein (323 aa).

This is an uncharacterized protein from Thermotoga maritima (strain ATCC 43589 / DSM 3109 / JCM 10099 / NBRC 100826 / MSB8).